The following is a 478-amino-acid chain: Glutamyl-tRNA reductase (478 aa).

Substrate contacts are provided by residues 49–52, Ser-109, 114–116, and Gln-120; these read TCNR and EQQ. The active-site Nucleophile is Cys-50. 191–196 contacts NADP(+); that stretch reads GAGSMG.

Belongs to the glutamyl-tRNA reductase family. Homodimer.

The catalysed reaction is (S)-4-amino-5-oxopentanoate + tRNA(Glu) + NADP(+) = L-glutamyl-tRNA(Glu) + NADPH + H(+). It participates in porphyrin-containing compound metabolism; protoporphyrin-IX biosynthesis; 5-aminolevulinate from L-glutamyl-tRNA(Glu): step 1/2. Catalyzes the NADPH-dependent reduction of glutamyl-tRNA(Glu) to glutamate 1-semialdehyde (GSA). In Rhodococcus opacus (strain B4), this protein is Glutamyl-tRNA reductase.